The chain runs to 60 residues: Small, acid-soluble spore protein H (60 aa).

The protein belongs to the SspH family.

The protein localises to the spore core. The chain is Small, acid-soluble spore protein H from Halalkalibacterium halodurans (strain ATCC BAA-125 / DSM 18197 / FERM 7344 / JCM 9153 / C-125) (Bacillus halodurans).